The chain runs to 181 residues: Squamosa promoter-binding-like protein 5 (181 aa).

The span at 1–10 (MEGQRTQRRG) shows a compositional bias: basic residues. Residues 1–58 (MEGQRTQRRGYLKDKATVSNLVEEEMENGMDGEEEDGGDEDKRKKVMERVRGPSTDRV) are disordered. The span at 22–39 (VEEEMENGMDGEEEDGGD) shows a compositional bias: acidic residues. The span at 40-51 (EDKRKKVMERVR) shows a compositional bias: basic and acidic residues. The SBP-type zinc-finger motif lies at 60 to 137 (SRLCQVDRCT…AGHNERRRKI (78 aa)). 8 residues coordinate Zn(2+): Cys63, Cys68, Cys85, His88, Cys104, Cys107, His111, and Cys123. The Bipartite nuclear localization signal motif lies at 120 to 136 (KRSCRRRLAGHNERRRK). The segment at 128–181 (AGHNERRRKISGDSFGEGSGRRGFSGQLIQTQERNRVDRKLPMTNSSFKRPQIR) is disordered. Positions 170-181 (MTNSSFKRPQIR) are enriched in polar residues.

Zn(2+) serves as cofactor. Expressed in the inflorescence apical meristem and young flowers.

The protein localises to the nucleus. The protein resides in the cytoplasm. Trans-acting factor that binds specifically to the consensus nucleotide sequence 5'-TNCGTACAA-3' of AP1 promoter. Promotes both vegetative phase change and flowering. The sequence is that of Squamosa promoter-binding-like protein 5 (SPL5) from Arabidopsis thaliana (Mouse-ear cress).